A 271-amino-acid chain; its full sequence is ALMLQGVDLLADAVAVTMGPKGRTVIIEQSWGSPKLVQDVANNTNEEAGDGTTTATVLARGANPVEIRRGVMLAVDAVIAELKKTLNDELEIIEGMKFDRGYISPYFINTSKCEFQDAYVLLSEKKISSVQSIVPALEIANAHRKPLVIIAEDVDGEALSTLVLNRVGLQVVAVKAPGFGDNRKNQLKDMAIATGGAVFGEEGLNLNLEDVQAHDLGKIQEITEQLDITTSEYEKEKVTDALNATRAAVEEGIVLGGGCALLRIGIEIIKR.

A phosphoserine mark is found at Ser-30 and Ser-33. 50–54 is an ATP binding site; that stretch reads DGTTT. At Lys-83 the chain carries N6-acetyllysine. Residues Lys-84, Lys-97, and Lys-112 each carry the N6-acetyllysine; alternate modification. N6-succinyllysine; alternate is present on residues Lys-84, Lys-97, and Lys-112. Position 125 is an N6-acetyllysine (Lys-125). Residue Lys-126 is modified to N6-acetyllysine; alternate. N6-succinyllysine; alternate is present on Lys-126. Residue Lys-145 is modified to N6-acetyllysine. Lys-175 is subject to N6-succinyllysine. An N6-acetyllysine mark is found at Lys-188 and Lys-237. Gly-257 contributes to the ATP binding site. Lys-270 carries the post-translational modification N6-acetyllysine.

This sequence belongs to the chaperonin (HSP60) family. In terms of assembly, homoheptamer arranged in a ring structure. The functional units of these chaperonins consist of heptameric rings of the large subunit Hsp60, which function as a back-to-back double ring. Interacts with 2 heptameric Hsp10 rings to form the symmetrical football complex. Interacts with HRAS. Interacts with ATAD3A. Interacts with ETFBKMT and EEF1AKMT3. Interacts with MFHAS1. Detected at higher levels in caput epididymal spermatazoa than in cauda epididymal spermatazoa (at protein level).

It is found in the mitochondrion matrix. It carries out the reaction ATP + H2O + a folded polypeptide = ADP + phosphate + an unfolded polypeptide.. Functionally, chaperonin implicated in mitochondrial protein import and macromolecular assembly. Together with Hsp10, facilitates the correct folding of imported proteins. May also prevent misfolding and promote the refolding and proper assembly of unfolded polypeptides generated under stress conditions in the mitochondrial matrix. The functional units of these chaperonins consist of heptameric rings of the large subunit Hsp60, which function as a back-to-back double ring. In a cyclic reaction, Hsp60 ring complexes bind one unfolded substrate protein per ring, followed by the binding of ATP and association with 2 heptameric rings of the co-chaperonin Hsp10. This leads to sequestration of the substrate protein in the inner cavity of Hsp60 where, for a certain period of time, it can fold undisturbed by other cell components. Synchronous hydrolysis of ATP in all Hsp60 subunits results in the dissociation of the chaperonin rings and the release of ADP and the folded substrate protein. The chain is 60 kDa heat shock protein, mitochondrial from Mesocricetus auratus (Golden hamster).